A 263-amino-acid polypeptide reads, in one-letter code: 3-methyl-2-oxobutanoate hydroxymethyltransferase (263 aa).

Positions 45 and 84 each coordinate Mg(2+). 3-methyl-2-oxobutanoate is bound by residues 45 to 46 (DS), D84, and K112. Mg(2+) is bound at residue E114. Residue E181 is the Proton acceptor of the active site.

It belongs to the PanB family. As to quaternary structure, homodecamer; pentamer of dimers. It depends on Mg(2+) as a cofactor.

Its subcellular location is the cytoplasm. The enzyme catalyses 3-methyl-2-oxobutanoate + (6R)-5,10-methylene-5,6,7,8-tetrahydrofolate + H2O = 2-dehydropantoate + (6S)-5,6,7,8-tetrahydrofolate. It functions in the pathway cofactor biosynthesis; (R)-pantothenate biosynthesis; (R)-pantoate from 3-methyl-2-oxobutanoate: step 1/2. Catalyzes the reversible reaction in which hydroxymethyl group from 5,10-methylenetetrahydrofolate is transferred onto alpha-ketoisovalerate to form ketopantoate. This is 3-methyl-2-oxobutanoate hydroxymethyltransferase from Buchnera aphidicola subsp. Acyrthosiphon pisum (strain APS) (Acyrthosiphon pisum symbiotic bacterium).